We begin with the raw amino-acid sequence, 449 residues long: Protein cortex (449 aa).

WD repeat units lie at residues 108–148, 149–188, 198–237, 283–327, 345–382, and 386–425; these read TYSY…ISQG, YAEY…KIDS, NRNC…ISWR, DSDW…VRDT, TGEL…DQWG, and SGLD…KKMK. Positions 386-397 match the D-box motif; it reads SGLDRVRTMVFS.

Belongs to the WD repeat CORT family.

The protein resides in the cytoplasm. Controls wing pigmentation patterning by regulating scale cell development, thereby playing a key role in mimicry and crypsis. Probably acts as an activator of the anaphase promoting complex/cyclosome (APC/C) that promotes the ubiquitin ligase activity and substrate specificity of the APC/C. The polypeptide is Protein cortex (Heliconius erato (Crimson patched longwing butterfly)).